A 944-amino-acid polypeptide reads, in one-letter code: E3 ubiquitin-protein ligase HACE1 (944 aa).

ANK repeat units lie at residues 23 to 55 (LPED…NSKF), 64 to 93 (VKRS…DPNY), 97 to 126 (SGCT…DVNI), 130 to 159 (EGLT…NVDV), 163 to 192 (MGQT…DINR), 196 to 226 (SGAT…YLPD), and 228 to 253 (NGVT…QHHP). In terms of domain architecture, HECT spans 609 to 944 (NCEKLKQGIA…HCGSYGYTMA (336 aa)). Cys-911 acts as the Glycyl thioester intermediate in catalysis.

Its subcellular location is the golgi apparatus. The protein localises to the golgi stack membrane. The protein resides in the cytoplasm. It is found in the endoplasmic reticulum. The enzyme catalyses S-ubiquitinyl-[E2 ubiquitin-conjugating enzyme]-L-cysteine + [acceptor protein]-L-lysine = [E2 ubiquitin-conjugating enzyme]-L-cysteine + N(6)-ubiquitinyl-[acceptor protein]-L-lysine.. It functions in the pathway protein modification; protein ubiquitination. E3 ubiquitin-protein ligase involved in Golgi membrane fusion and regulation of small GTPases. Acts as a regulator of Golgi membrane dynamics during the cell cycle: recruited to Golgi membrane by Rab proteins and regulates postmitotic Golgi membrane fusion. Acts by mediating ubiquitination during mitotic Golgi disassembly, ubiquitination serving as a signal for Golgi reassembly later, after cell division. This Xenopus laevis (African clawed frog) protein is E3 ubiquitin-protein ligase HACE1 (hace1).